We begin with the raw amino-acid sequence, 514 residues long: Na(+)/H(+) antiporter NhaB (514 aa).

A run of 12 helical transmembrane segments spans residues 23–43, 63–83, 97–117, 120–140, 144–164, 202–222, 238–258, 303–323, 357–377, 391–411, 447–467, and 475–495; these read LALL…PFIA, PLLP…TSAA, LLLM…LFIF, LLLS…AAAF, FLDA…FYGI, LMMH…VGEP, FFLR…LTCM, AVIG…VGLI, LTVF…APII, LFYL…VGTI, ATPN…APLI, and VWMA…CVEF.

This sequence belongs to the NhaB Na(+)/H(+) (TC 2.A.34) antiporter family.

Its subcellular location is the cell inner membrane. It catalyses the reaction 2 Na(+)(in) + 3 H(+)(out) = 2 Na(+)(out) + 3 H(+)(in). In terms of biological role, na(+)/H(+) antiporter that extrudes sodium in exchange for external protons. This is Na(+)/H(+) antiporter NhaB from Salmonella choleraesuis (strain SC-B67).